Here is a 310-residue protein sequence, read N- to C-terminus: Thioredoxin reductase (310 aa).

34 to 41 (NGMQPGGQ) is a binding site for FAD. Residues cysteine 135 and cysteine 138 are joined by a disulfide bond. 281–290 (DVQDKIYRQA) serves as a coordination point for FAD.

This sequence belongs to the class-II pyridine nucleotide-disulfide oxidoreductase family. In terms of assembly, homodimer. FAD is required as a cofactor.

It is found in the cytoplasm. The catalysed reaction is [thioredoxin]-dithiol + NADP(+) = [thioredoxin]-disulfide + NADPH + H(+). The chain is Thioredoxin reductase (trxB) from Rickettsia typhi (strain ATCC VR-144 / Wilmington).